Here is a 3712-residue protein sequence, read N- to C-terminus: MGHGVASIGALLVILAISYCQAELTPPYFNLATGRKIYATATCGQDTDGPELYCKLVGANTEHDHIDYSVIQGQVCDYCDPTVPERNHPPENAIDGTEAWWQSPPLSRGMKFNEVNLTINFEQEFHVAYLFIRMGNSPRPGLWTLEKSTDYGKTWTPWQHFSDTPADCETYFGKDTYKPITRDDDVICTTEYSKIVPLENGEIPVMLLNERPSSTNYFNSTVLQEWTRATNVRIRLLRTKNLLGHLMSVARQDPTVTRRYFYSIKDISIGGRCMCNGHADTCDVKDPKSPVRILACRCQHHTCGIQCNECCPGFEQKKWRQNTNARPFNCEPCNCHGHSNECKYDEEVNRKGLSLDIHGHYDGGGVCQNCQHNTVGINCNKCKPKYYRPKGKHWNETDVCSPCQCDYFFSTGHCEEETGNCECRAAFQPPSCDSCAYGYYGYPNCRECECNLNGTNGYHCEAESGQQCPCKINFAGAYCKQCAEGYYGFPECKACECNKIGSITNDCNVTTGECKCLTNFGGDNCERCKHGYFNYPTCSYCDCDNQGTESEICNKQSGQCICREGFGGPRCDQCLPGFYNYPDCKPCNCSSTGSSAITCDNTGKCNCLNNFAGKQCTLCTAGYYSYPDCLPCHCDSHGSQGVSCNSDGQCLCQPNFDGRQCDSCKEGFYNFPSCEDCNCDPAGVIDKFAGCGSVPVGELCKCKERVTGRICNECKPLYWNLNISNTEGCEICDCWTDGTISALDTCTSKSGQCPCKPHTQGRRCQECRDGTFDLDSASLFGCKDCSCDVGGSWQSVCDKISGQCKCHPRITGLACTQPLTTHFFPTLHQFQYEYEDGSLPSGTQVRYDYDEAAFPGFSSKGYVVFNAIQNDVRNEVNVFKSSLYRIVLRYVNPNAENVTATISVTSDNPLEVDQHVKVLLQPTSEPQFVTVAGPLGVKPSAIVLDPGRYVFTTKANKNVMLDYFVLLPAAYYEAGILTRHISNPCELGNMELCRHYKYASVEVFSPAATPFVIGENSKPTNPVETYTDPEHLQIVSHVGDIPVLSGSQNELHYIVDVPRSGRYIFVIDYISDRNFPDSYYINLKLKDNPDSETSVLLYPCLYSTICRTSVNEDGMEKSFYINKEDLQPVIISADIEDGSRFPIISVTAIPVDQWSIDYINPSPVCVIHDQQCATPKFRSVPDSKKIEFETDHEDRIATNKPPYASLDERVKLVHLDSQNEATIVIESKVDATKPNLFVILVKYYQPSHPKYQVYYTLTAGKNQYDGKFDIQHCPSSSGCRGVIRPAGEGSFEIDDEFKFTITTDRSQSVWLDYLVVVPLKQYNDDLLVEETFDQTKEFIQNCGHDHFHITHNASDFCKKSVFSLTADYNSGALPCNCDYAGSTSFECHPFGGQCQCKPNVIERTCGACRSRYYGFPDCKPCKCPNSAMCEPTTGECMCPPNVIGDLCEKCAPNTYGFHQVIGCEECACNPMGIANGNSQCDLFNGTCECRQNIEGRACDVCSNGYFNFPHCEQCSCHKPGTELEVCDKIDGACFCKKNVVGRDCDQCVDGTYNLQESNPDGCTTCFCFGKTSRCDSAYLRVYNVSLLKHVSITTPEFHEESIKFDMWPVPADEILLNETTLKADFTLREVNDERPAYFGVLDYLLNQNNHISAYGGDLAYTLHFTSGFDGKYIVAPDVILFSEHNALVHTSYEQPSRNEPFTNRVNIVESNFQTISGKPVSRADFMMVLRDLKVIFIRANYWEQTLVTHLSDVYLTLADEDADGTGEYQFLAVERCSCPPGYSGHSCEDCAPGYYRDPSGPYGGYCIPCECNGHSETCDCATGICSKCQHGTEGDHCERCVSGYYGNATNGTPGDCMICACPLPFDSNNFATSCEISESGDQIHCECKPGYTGPRCESCANGFYGEPESIGQVCKPCECSGNINPEDQGSCDTRTGECLRCLNNTFGAACNLCAPGFYGDAIKLKNCQSCDCDDLGTQTCDPFVGVCTCHENVIGDRCDRCKPDHYGFESGVGCRACDCGAASNSTQCDPHTGHCACKSGVTGRQCDRCAVDHWKYEKDGCTPCNCNQGYSRGFGCNPNTGKCQCLPGVIGDRCDACPNRWVLIKDEGCQECNNCHHALLDVTDRMRYQIDSVLEDFNSVTLAFFTSQKLNYYDQLADELEPKVKLLDPNSVDLSPSKKANSELESDAKSYAKQVNQTLANAFDIRERSSTTLGNITVAYDEAVKSADQAKEAIASVEALSKNLEAAASTKIDAALEQAQHILGQINGTSIELTPNEQVLEKARKLYEEVNTLVLPIKAQNKSLNALKNDIGEFSDHLEDLFNWSEASQAKSADVERRNVANQKAFDNSKFDTVSEQKLQAEKNIKDAGNFLINGDLTLNQINQKLDNLRDALNELNSFNKNVDEELPVREDQHKEADALTDQAEQKAAELAIKAQDLAAQYTDMTASAEPAIKAATAYSGIVEAVEAAQKLSQDAISAAGNATDKTDGIEERAHLADTGSTDLLQRARQSLQKVQDDLEPRLNASAGKVQKISAVNNATEHQLKDINKLIDQLPAESQRDMWKNSNANASDALEILKNVLEILEPVSVQTPKELEKAHGINRDLDLTNKDVSQANKQLDDVEGSVSKLNELAEDIEEQQHRVGSQSRQLGQEIENLKAQVEAARQLANSIKVGVNFKPSTILELKTPEKTKLLATRTNLSTYFRTTEPSGFLLYLGNDNKTAQKNNDFVAVEIVNGYPILTIDLGNGPERITSDKYVADGRWYQAVVDRMGPNAKLTIREELPNGDVVEHSKSGYLEGSQNILHVDKNSRLFVGGYPGISDFNAPPDLTTNSFSGDIEDLKIGDESVGLWNFVYGDDNDQGARERDVLLEKKKPVTGLRFKGNGYVQLNATSNLKSRSSIQFSFKADKDTSNGLLFFYGRDKHYMSIEMIDGAIFFNISLGEGGGVQSGSQDRYNDNQWHKVQAERENRNGLLKVDDIVISRTNAPLEADLELPKLRRLYFGGHPRRLNTSISLQPNFDGCIDNVVINQGVVDLTEYVTGGGVEEGCSAKFSTVVSYAPHEYGFLRMNNVSSDNNLHVVLHFKTTQPNGVLFYAANHDQSSTIGLSLQDGLLKLNSMGSQLVIDDRILNDGEDHVVTVQHTQGELRLTVDDVDNKRLGSPQPLILEGGDIFFAGLPDNYRTPRNALASLAYFVGCISDVTVNEEIINFANSAEKKNGNINGCPPHVLAYEPSLVPSYYPSGDNEVESPWSNADTLPPLKPDIESTLPPTTPTTTTTTTTTTTSTTTTSTTTTTTTPSPIVIDEEKEIEAKTPQKILTTRPPAKLNLPSDERCKLPEQPNFDVDFTEAGYRFYGLREQRLQINSLPVKVRRHHDIGISFRTERPNGLLIYAGSKQRDDFIAVYLLDGRVTYEIRVGAQLQAKITTEAELNDGTWHTVEVVRTQRKVSLLIDKLEQPGSVDLNAERSAPVLAVELPIYLGGVNKFLESEVKNLTDFKTEVPYFNGCLKNIKFDAMDLETPPEEFGVVPCSEQVERGLFFNNQKAFVKIFDHFDVGTEMKISFDFRPRDPNGLLFSVHGKNSYAILELVDNTLYFTVKTDLKNIVSTNYKLPNNESFCDGKTRNVQAIKSKFVINIAVDFISSNPGVGNEGSVITRTNRPLFLGGHVAFQRAPGIKTKKSFKGCISKVEVNQRMINITPNMVVGDIWQGYCPLN.

The first 22 residues, 1–22, serve as a signal peptide directing secretion; that stretch reads MGHGVASIGALLVILAISYCQA. The 250-residue stretch at 23 to 272 folds into the Laminin N-terminal domain; that stretch reads ELTPPYFNLA…SIKDISIGGR (250 aa). 2 N-linked (GlcNAc...) asparagine glycosylation sites follow: N116 and N219. Cystine bridges form between C273/C282, C275/C296, C298/C307, C310/C330, C333/C342, C335/C367, C370/C379, C382/C400, C403/C414, C405/C421, C423/C432, C435/C445, C448/C460, C450/C468, C470/C479, C482/C492, C495/C507, C497/C514, C516/C525, C528/C538, C541/C553, C543/C560, C562/C571, C574/C584, C587/C599, C589/C605, C607/C616, C619/C629, C632/C644, C634/C650, C652/C661, C664/C674, C677/C691, C679/C700, C702/C711, C714/C729, C732/C746, C734/C753, C755/C764, C767/C782, C785/C797, C787/C804, and C806/C815. Laminin EGF-like domains lie at 273 to 332, 333 to 402, 403 to 447, 448 to 494, 495 to 540, 541 to 586, 587 to 631, 632 to 676, 677 to 731, and 732 to 784; these read CMCN…NCEP, CNCH…VCSP, CQCD…NCRE, CECN…ECKA, CECN…TCSY, CDCD…DCKP, CNCS…DCLP, CHCD…SCED, CNCD…GCEI, and CDCW…GCKD. N395 is a glycosylation site (N-linked (GlcNAc...) asparagine). N-linked (GlcNAc...) asparagine glycosylation occurs at N453. The N-linked (GlcNAc...) asparagine glycan is linked to N508. N588 carries an N-linked (GlcNAc...) asparagine glycan. N722 carries N-linked (GlcNAc...) asparagine glycosylation. The Laminin EGF-like 11; truncated domain maps to 785–815; the sequence is CSCDVGGSWQSVCDKISGQCKCHPRITGLAC. A domain IV'' region spans residues 816–1374; it reads TQPLTTHFFP…TADYNSGALP (559 aa). 2 N-linked (GlcNAc...) asparagine glycosylation sites follow: N897 and N1352. Disulfide bonds link C1375–C1387, C1377–C1394, C1396–C1405, C1408–C1418, C1421–C1429, C1423–C1436, C1438–C1447, C1450–C1463, C1466–C1480, C1468–C1487, C1489–C1498, C1501–C1511, C1514–C1526, C1516–C1533, C1535–C1544, and C1547–C1562. Laminin EGF-like domains follow at residues 1375-1420, 1421-1465, 1466-1513, and 1514-1564; these read CNCD…DCKP, CKCP…GCEE, CACN…HCEQ, and CSCH…GCTT. An N-linked (GlcNAc...) asparagine glycan is attached at N1484. One can recognise a Laminin EGF-like 16; first part domain in the interval 1565–1574; sequence CFCFGKTSRC. N-linked (GlcNAc...) asparagine glycans are attached at residues N1583 and N1617. The 191-residue stretch at 1585–1775 folds into the Laminin IV type A domain; sequence SLLKHVSITT…GEYQFLAVER (191 aa). The Laminin EGF-like 16; second part domain maps to 1776-1808; that stretch reads CSCPPGYSGHSCEDCAPGYYRDPSGPYGGYCIP. 26 disulfide bridges follow: C1778–C1787, C1790–C1806, C1809–C1818, C1811–C1825, C1828–C1837, C1840–C1856, C1859–C1874, C1861–C1885, C1887–C1896, C1899–C1914, C1917–C1931, C1919–C1938, C1941–C1950, C1953–C1967, C1970–C1980, C1972–C1987, C1989–C1998, C2001–C2014, C2017–C2028, C2019–C2035, C2037–C2046, C2049–C2061, C2064–C2076, C2066–C2083, C2085–C2094, and C2097–C2109. 6 Laminin EGF-like domains span residues 1809–1858, 1859–1916, 1917–1969, 1970–2016, 2017–2063, and 2064–2111; these read CECN…DCMI, CACP…VCKP, CECS…NCQS, CDCD…GCRA, CDCG…GCTP, and CNCN…GCQE. N-linked (GlcNAc...) asparagine glycosylation occurs at N1847. N-linked (GlcNAc...) asparagine glycosylation occurs at N1943. An N-linked (GlcNAc...) asparagine glycan is attached at N2024. The tract at residues 2112 to 2671 is domain II and I; the sequence is CNNCHHALLD…EAARQLANSI (560 aa). The stretch at 2178-2249 forms a coiled coil; sequence KKANSELESD…LSKNLEAAAS (72 aa). N-linked (GlcNAc...) asparagine glycans are attached at residues N2196, N2215, N2267, N2301, and N2323. Residues 2301-2321 adopt a coiled-coil conformation; the sequence is NKSLNALKNDIGEFSDHLEDL. The stretch at 2376 to 2450 forms a coiled coil; the sequence is DLTLNQINQK…QYTDMTASAE (75 aa). Residues N2482, N2524, N2538, N2569, N2699, N2720, N2890, N2938, and N3010 are each glycosylated (N-linked (GlcNAc...) asparagine). Positions 2541–2676 form a coiled coil; the sequence is EHQLKDINKL…LANSIKVGVN (136 aa). Laminin G-like domains are found at residues 2672 to 2868, 2876 to 3048, and 3055 to 3223; these read KVGV…ERDV, VTGL…EEGC, and VVSY…INGC. A disulfide bond links C3022 and C3048. An N-linked (GlcNAc...) asparagine glycan is attached at N3070. C3196 and C3223 form a disulfide bridge. Residues 3244-3297 form a disordered region; the sequence is NEVESPWSNADTLPPLKPDIESTLPPTTPTTTTTTTTTTTSTTTTSTTTTTTTP. Low complexity predominate over residues 3265 to 3297; sequence STLPPTTPTTTTTTTTTTTSTTTTSTTTTTTTP. Laminin G-like domains are found at residues 3349-3528 and 3534-3709; these read GYRF…VVPC and RGLF…QGYC. N3491 is a glycosylation site (N-linked (GlcNAc...) asparagine). Residues C3505 and C3528 are joined by a disulfide bond. The N-linked (GlcNAc...) asparagine glycan is linked to N3612. C3682 and C3709 are oxidised to a cystine.

Laminin is a complex glycoprotein, consisting of three different polypeptide chains (alpha, beta, gamma), which are bound to each other by disulfide bonds into a cross-shaped molecule comprising one long and three short arms with globules at each end. In terms of tissue distribution, newly formed mesoderm and later prominently expressed in hemocytes, which also synthesize collagen IV. Expressed in muscles.

The protein localises to the secreted. Its subcellular location is the extracellular space. The protein resides in the extracellular matrix. It is found in the basement membrane. It localises to the synapse. The protein localises to the cell projection. Its subcellular location is the axon. The protein resides in the cytoplasmic vesicle. It is found in the secretory vesicle. It localises to the synaptic vesicle. Functionally, binding to cells via a high affinity receptor, laminin is thought to mediate the attachment, migration and organization of cells into tissues during embryonic development by interacting with other extracellular matrix components. Activates presynaptic signaling involving integrin alpha-PS3/beta-nu and Fak to suppress neuromuscular junction (NMJ) growth during larval development and during low crawling activity, but not during higher-crawling conditions. Mediates, together with integrin alpha-PS3/beta-nu, glutamate receptor-modulated NMJ growth. This is Laminin subunit alpha (LanA) from Drosophila melanogaster (Fruit fly).